Consider the following 161-residue polypeptide: Protein-export protein SecB (161 aa).

The protein belongs to the SecB family. As to quaternary structure, homotetramer, a dimer of dimers. One homotetramer interacts with 1 SecA dimer.

The protein resides in the cytoplasm. Its function is as follows. One of the proteins required for the normal export of preproteins out of the cell cytoplasm. It is a molecular chaperone that binds to a subset of precursor proteins, maintaining them in a translocation-competent state. It also specifically binds to its receptor SecA. The protein is Protein-export protein SecB of Afipia carboxidovorans (strain ATCC 49405 / DSM 1227 / KCTC 32145 / OM5) (Oligotropha carboxidovorans).